The sequence spans 91 residues: Small ribosomal subunit protein uS17 (91 aa).

The protein belongs to the universal ribosomal protein uS17 family. As to quaternary structure, part of the 30S ribosomal subunit.

In terms of biological role, one of the primary rRNA binding proteins, it binds specifically to the 5'-end of 16S ribosomal RNA. The sequence is that of Small ribosomal subunit protein uS17 from Thermobifida fusca (strain YX).